The primary structure comprises 60 residues: Potassium channel toxin Tst-beta-KTx (60 aa).

The BetaSPN-type CS-alpha/beta domain occupies 26–60; that stretch reads QFGCPAYEGYCNDHCNDIERKDGECHGFKCKCAKD. Intrachain disulfides connect C29–C50, C36–C55, and C40–C57.

This sequence belongs to the long chain scorpion toxin family. Class 1 subfamily. Expressed by the venom gland.

The protein resides in the secreted. In terms of biological role, inhibits voltage-gated potassium channels Kv1.1/KCNA1, Kv1.2/KCNA2, and Kv1.3/KCNA3. Its function is as follows. Does not induce hemolytic activity, lactate dehydrogenase (LDH) release from mast cells, mast cell degranulation, and antimicrobial effects. In vivo, injection into mice causes moderate edema formation, but induces very weak or no change in nociceptive sensibility. It also reduces mice locomotion, suggesting an increase in anxiety, but causes no alteration in rearing (standing on hind limbs). This chain is Potassium channel toxin Tst-beta-KTx, found in Tityus stigmurus (Brazilian scorpion).